The sequence spans 641 residues: UPF0329 protein ECU11_0030 (641 aa).

Residues Arg358 to Ala387 are compositionally biased toward basic and acidic residues. The segment at Arg358–Gly444 is disordered. Positions Lys435 to Gly444 are enriched in basic residues.

It belongs to the UPF0329 family.

This is UPF0329 protein ECU11_0030 from Encephalitozoon cuniculi (strain GB-M1) (Microsporidian parasite).